Here is a 304-residue protein sequence, read N- to C-terminus: Acetyl-coenzyme A carboxylase carboxyl transferase subunit beta (304 aa).

In terms of domain architecture, CoA carboxyltransferase N-terminal spans 23 to 292; the sequence is VWTKCDSCGQ…PNPEAPREGV (270 aa). The Zn(2+) site is built by cysteine 27, cysteine 30, cysteine 46, and cysteine 49. A C4-type zinc finger spans residues 27–49; sequence CDSCGQVLYRAELERNLEVCPKC. The interval 284-304 is disordered; the sequence is NPEAPREGVVVPPVPDQEPEA. The span at 295–304 shows a compositional bias: pro residues; the sequence is PPVPDQEPEA.

The protein belongs to the AccD/PCCB family. Acetyl-CoA carboxylase is a heterohexamer composed of biotin carboxyl carrier protein (AccB), biotin carboxylase (AccC) and two subunits each of ACCase subunit alpha (AccA) and ACCase subunit beta (AccD). It depends on Zn(2+) as a cofactor.

It is found in the cytoplasm. It catalyses the reaction N(6)-carboxybiotinyl-L-lysyl-[protein] + acetyl-CoA = N(6)-biotinyl-L-lysyl-[protein] + malonyl-CoA. The protein operates within lipid metabolism; malonyl-CoA biosynthesis; malonyl-CoA from acetyl-CoA: step 1/1. Its function is as follows. Component of the acetyl coenzyme A carboxylase (ACC) complex. Biotin carboxylase (BC) catalyzes the carboxylation of biotin on its carrier protein (BCCP) and then the CO(2) group is transferred by the transcarboxylase to acetyl-CoA to form malonyl-CoA. The chain is Acetyl-coenzyme A carboxylase carboxyl transferase subunit beta from Shigella boydii serotype 4 (strain Sb227).